The primary structure comprises 2326 residues: MSGTVSAAAGLRPLLETLQDPAAPAGDLTDAHLSLVNRLSGEEGREFVAAVRKHFPRLCKVFKAHISSENSELSNAALQALGFCVFNSKITSELSASEVEDLLSTLNSIAVKTSDKNTRTRALWVISKQTFPSEIIKKEVSSLISTLETILTKGDVQSMIVEYEALNVVIRLMEQAPAQMGEEAVRWAKLIIPLVVHSAHKVQLRGATALEIGMPLLLQKQQEVAAVTEHLMTTKLISELQKLFSTKNETYVLKLWPLFVKLLGKTLHRSGSFINSLLQLEELGFRSGSPVVKKIAFIAWKSLIDNFALNPDILCSAKRLKLLMQPLSSIHVRTEALALTKLEVWWYLLMRLGPQLPANFEQVCIPLIQSTLSVDSAAALQGTPSRVPSNPNSANPPQKPGPYPFASPATPRMNLNSSTAGLVAIPSIQLLGIEMLLHFLMGPEVLEFAKRNKLVLSLEPLQHPLISSPSFFCKHASTFINAVQDGFIAVGKEVPESMLNSIWKDINGHVKAAIESGNKKEKQGSEVLTMLLQALKNIVRSNSLPVQKILSLIDITVKELPPKVLGSPAYQIADMDLLNGTPALFLVQLPFHNNLLEWCVTDERFFIILETLMRYVLSGPTSLLAFSESVLCVINQNAKQVENKEHLWRMWSIVVNPLTDWINRTNEVNQGDALEHNFNAVYNALLLPVSHIFPVQEFPQPTMKSLLRAWSDLYRAFARCAALVATAEENLCCEELCAKIISGLEGETPVMSAMLDGLTHVVAVMVDCINFAPYGTKYQPKNRSPQTPTDWSKKKREPLGKLSSLFKLLVMLLDSFHALSSEETCPEPLASVGHSLIAVLHNIISHVSLPSMIGTMFAVFSKPLAVFYEKTKLADVPKAYSNLNSKLEKLLAEIILCLQSHCMGCYDSELLEQLSPLLCVIFQHKSKQMRKQCANFWNTTFAKAASLTYPEELKPVLSQAKQKMPLLLPGFESIEIADEQSGPFSDEAENSQWDAKLSGMEVNLGQKRDSILAQTGELKNEVKDKSDNVQVTSAKLKLEFSASKPKSDVLLEEEKSVDFVFIPPETKARILTEHQKEVLRSKRVGIPAMYNNLDSSQDTTLFSQYTQSQEDSLEKSPLENAKEDFKNNPQEENGKSESCIADSDGNTGDCKVDNPLEDVKEKSAYHIEKNSNSEEESSRGDRTGIIGEESSVGEALEKSGTETASKESLVGNENTSAISCSSTSSDVICGTPQPASRRQSFITLEKFDSSESRPFSPSALNSVSEVSQSAPVPDKQGNINVCKTGRKPGKSGEESRKSSQSEQISAAKRRLTRRQSKMEQQGNQQAKLVTNSEQEKGAQESFVSNSVENSPESPCSMEDTERVLTAQPQPVSSPEPDIKKAEAVMAEIEKVRAFEMDSKENTPPKTAVSSEQVMGDGSQGPHASLSQKTLRRSSRRRSENAEMAAGSQDKEDGYQKKDKRKEDEKALQKKVPQTKEDASQKQKAVCGKASEHAIKKESSLPERSAAEDLGSKEPPAAKGADEEANRSAGKPEDTLKSDSEGQDCSSDTVSEKKRERPRYHTRRSSQGLLSSIENAEADGSETKKESLKKKSGKTKNKSDSLEGKRKDVQPESQSHGVSSQVDESKNLSGMNESELSSEVSTDAALMSAPSDVKNQVLLAGADEAEGSASSRTSPSTQNVSVEQSKAGVLPESFSDPRVSDEVLKGDENKCIEKQSSVEQHSSVQPENVQGANTSGSDLSSLQMQDCQHKRSKRVRKAKSCDCCSKRVKQQTSLSESKSEDPRELIEPQATPVQMAVSTAEVSGSSNLEESLSITPCAMSTPLPPAKESGMLSLERERTGEDNLQGNSGVMKEEAENPAHTAGEVSDPVVEIKVKEEVDGNDRAEQCVSVSECASDEPSDSSVAAGDQSEEKAAVEKEEESQHGEMEEVPEADGSKPETKQMDELEGNRDGKEEAENALEEVCITPDNEMREELLEAEITVPENVAVGNKDVVVENKSADSPQKPEGLDSFTSVNGSPSGVQARCTWSPSASPSTSILKRGVKRHHEDDSLSPANKIRRVSFANPIYQEGLADDIDRRSPVIRSHSSPSSRSLKILSNIQTKHITTPTKGFLSPGSRNPKFKSSKKCLMTEMVKESLPSPTECVYPALAGCKAPVDVILPQITSNICARGLGQLIRAKNIKTVGDLSALTASEIKTLPIRSPKVSNVKKALRGYHEQQVKSRGCEEIGALEDGERTVNSAEDKSPPVDEEKLATDLGEAIALSSSSPPPADLLSQMDLLAAQLTSEDLRSYPGSRLFEMQEKLASMSDCIMKTLRSRWRSPPHDSAE.

Disordered regions lie at residues 381 to 410, 1105 to 1965, and 1993 to 2050; these read QGTPSRVPSNPNSANPPQKPGPYPFASPAT, YTQS…CITP, and VENK…DDSL. Positions 382–396 are enriched in polar residues; sequence GTPSRVPSNPNSANP. Composition is skewed to basic and acidic residues over residues 1112 to 1126 and 1150 to 1182; these read SLEKSPLENAKEDFK and CKVDNPLEDVKEKSAYHIEKNSNSEEESSRGDR. Over residues 1216–1225 the composition is skewed to low complexity; the sequence is SAISCSSTSS. Composition is skewed to polar residues over residues 1233–1242 and 1252–1270; these read QPASRRQSFI and SRPFSPSALNSVSEVSQSA. Residues 1290–1299 are compositionally biased toward basic and acidic residues; the sequence is KSGEESRKSS. Composition is skewed to polar residues over residues 1318–1332 and 1341–1353; these read MEQQGNQQAKLVTNS and SFVSNSVENSPES. Positions 1376-1402 are enriched in basic and acidic residues; the sequence is PDIKKAEAVMAEIEKVRAFEMDSKENT. The segment covering 1403 to 1412 has biased composition (polar residues); sequence PPKTAVSSEQ. Basic and acidic residues-rich tracts occupy residues 1448–1480, 1489–1511, and 1519–1539; these read QDKEDGYQKKDKRKEDEKALQKKVPQTKEDASQ, ASEHAIKKESSLPERSAAEDLGS, and GADEEANRSAGKPEDTLKSDS. Residues 1564–1573 show a composition bias toward polar residues; that stretch reads SSQGLLSSIE. Residues 1586–1595 are compositionally biased toward basic residues; that stretch reads SLKKKSGKTK. A compositionally biased stretch (basic and acidic residues) spans 1596–1609; sequence NKSDSLEGKRKDVQ. Polar residues-rich tracts occupy residues 1610-1640 and 1671-1683; these read PESQSHGVSSQVDESKNLSGMNESELSSEVS and RTSPSTQNVSVEQ. Residues 1697–1712 are compositionally biased toward basic and acidic residues; sequence RVSDEVLKGDENKCIE. The span at 1713 to 1745 shows a compositional bias: polar residues; it reads KQSSVEQHSSVQPENVQGANTSGSDLSSLQMQD. Over residues 1776-1785 the composition is skewed to basic and acidic residues; it reads SKSEDPRELI. A compositionally biased stretch (polar residues) spans 1795–1813; it reads AVSTAEVSGSSNLEESLSI. 3 stretches are compositionally biased toward basic and acidic residues: residues 1869 to 1884, 1908 to 1925, and 1932 to 1954; these read VEIKVKEEVDGNDRAE, SEEKAAVEKEEESQHGEM, and DGSKPETKQMDELEGNRDGKEEA. Residues 2009–2036 show a composition bias toward polar residues; sequence SFTSVNGSPSGVQARCTWSPSASPSTSI.

It belongs to the RIF1 family. Interacts with TP53BP1 (when phosphorylated by ATM).

The protein resides in the nucleus. It localises to the chromosome. The protein localises to the telomere. Its subcellular location is the cytoplasm. It is found in the cytoskeleton. The protein resides in the spindle. In terms of biological role, key regulator of TP53BP1 that plays a key role in the repair of double-strand DNA breaks (DSBs) in response to DNA damage: acts by promoting non-homologous end joining (NHEJ)-mediated repair of DSBs. In response to DNA damage, interacts with ATM-phosphorylated TP53BP1, allowing recruitment to DNA DSBs. Once recruited to DSBs, RIF1 and TP53BP1 act by promoting NHEJ-mediated repair of DSBs. In the same time, RIF1 and TP53BP1 specifically counteract DSBs resection via homologous recombination (HR) during G1 phase. The polypeptide is Telomere-associated protein RIF1 (Gallus gallus (Chicken)).